We begin with the raw amino-acid sequence, 154 residues long: Iron-sulfur cluster assembly 2 homolog, mitochondrial (154 aa).

Residues 1–8 (MAAARGLS) constitute a mitochondrion transit peptide. Cys79, Cys144, and Cys146 together coordinate Fe cation.

It belongs to the HesB/IscA family. Heterotetramer; forms a dimer of dimers with IBA57. Interacts with [2Fe-2S]-ISCA2 forming the heterodimer [2Fe- 2S]-ISCA2-IBA57 complex; [2Fe-2S] cluster binding is absolutely required to promote the complex formation.

The protein resides in the mitochondrion. Involved in the maturation of mitochondrial 4Fe-4S proteins functioning late in the iron-sulfur cluster assembly pathway. May be involved in the binding of an intermediate of Fe/S cluster assembly. The chain is Iron-sulfur cluster assembly 2 homolog, mitochondrial (ISCA2) from Pongo abelii (Sumatran orangutan).